A 320-amino-acid polypeptide reads, in one-letter code: MELLSPPLRDVDLTAPDGSLCSFATTDDFYDDPCFDSPDLRFFEDLDPRLMHVGALLKPEEHSHFPAAVHPAPGAREDEHVRAPSGHHQAGRCLLWACKACKRKTTNADRRKAATMRERRRLSKVNEAFETLKRCTSSNPNQRLPKVEILRNAIRYIEGLQALLRDQDAAPPGAAAAFYAPGPLPPGRGGEHYSGDSDASSPRSNCSDGMMDYSGPPSGARRRNCYEGAYYNEAPSEPRPGKSAAVSSLDCLSSIVERISTESPAAPALLLADVPSESPPRRQEAAAPSEGESSGDPTQSPDAAPQCPAGANPNPIYQVL.

Methionine 1 participates in a covalent cross-link: Peptide (Met-Gly) (interchain with G-Cter in ubiquitin). Lysine 104 is subject to N6-methyllysine; by EHMT2. Positions 109-160 (DRRKAATMRERRRLSKVNEAFETLKRCTSSNPNQRLPKVEILRNAIRYIEGL) constitute a bHLH domain. 2 disordered regions span residues 174–219 (AAAA…PPSG) and 262–320 (ESPA…YQVL). Composition is skewed to polar residues over residues 197–207 (SDASSPRSNCS) and 291–301 (GESSGDPTQSP).

As to quaternary structure, efficient DNA binding requires dimerization with another bHLH protein. Seems to form active heterodimers with ITF-2. Interacts with SUV39H1. Interacts with DDX5. Interacts with CHD2. Interacts with TSC22D3. Interacts with SETD3. Interacts with P-TEFB complex; promotes the transcriptional activity of MYOD1 through its CDK9-mediated phosphorylation. Interacts with CSRP3. Interacts with NUPR1. Phosphorylated by CDK9. This phosphorylation promotes its function in muscle differentiation. Post-translationally, acetylated by a complex containing EP300 and PCAF. The acetylation is essential to activate target genes. Conversely, its deacetylation by SIRT1 inhibits its function. In terms of processing, ubiquitinated on the N-terminus; which is required for proteasomal degradation. Methylation at Lys-104 by EHMT2/G9a inhibits myogenic activity.

Its subcellular location is the nucleus. In terms of biological role, acts as a transcriptional activator that promotes transcription of muscle-specific target genes and plays a role in muscle differentiation. Together with MYF5 and MYOG, co-occupies muscle-specific gene promoter core region during myogenesis. Induces fibroblasts to differentiate into myoblasts. Interacts with and is inhibited by the twist protein. This interaction probably involves the basic domains of both proteins. The polypeptide is Myoblast determination protein 1 (MYOD1) (Homo sapiens (Human)).